The chain runs to 82 residues: Cytochrome b559 subunit alpha (82 aa).

The chain crosses the membrane as a helical span at residues valine 22–tyrosine 36. Histidine 24 is a heme binding site.

Belongs to the PsbE/PsbF family. Heterodimer of an alpha subunit and a beta subunit. PSII is composed of 1 copy each of membrane proteins PsbA, PsbB, PsbC, PsbD, PsbE, PsbF, PsbH, PsbI, PsbJ, PsbK, PsbL, PsbM, PsbT, PsbX, PsbY, Psb30/Ycf12, peripheral proteins PsbO, CyanoQ (PsbQ), PsbU, PsbV and a large number of cofactors. It forms dimeric complexes. It depends on heme b as a cofactor.

The protein localises to the cellular thylakoid membrane. This b-type cytochrome is tightly associated with the reaction center of photosystem II (PSII). PSII is a light-driven water:plastoquinone oxidoreductase that uses light energy to abstract electrons from H(2)O, generating O(2) and a proton gradient subsequently used for ATP formation. It consists of a core antenna complex that captures photons, and an electron transfer chain that converts photonic excitation into a charge separation. This is Cytochrome b559 subunit alpha from Prochlorococcus marinus (strain MIT 9303).